Consider the following 28-residue polypeptide: Phospholipase A2 2 (28 aa).

This sequence belongs to the phospholipase A2 family. Group I subfamily. It depends on Ca(2+) as a cofactor. In terms of tissue distribution, expressed by the venom gland.

Its subcellular location is the secreted. It carries out the reaction a 1,2-diacyl-sn-glycero-3-phosphocholine + H2O = a 1-acyl-sn-glycero-3-phosphocholine + a fatty acid + H(+). In terms of biological role, snake venom phospholipase A2 (PLA2) that inhibits neuromuscular transmission by blocking acetylcholine release from the nerve termini. PLA2 catalyzes the calcium-dependent hydrolysis of the 2-acyl groups in 3-sn-phosphoglycerides. The chain is Phospholipase A2 2 from Micrurus nigrocinctus (Central American coral snake).